We begin with the raw amino-acid sequence, 93 residues long: Putative hemolysin E-like protein (93 aa).

It belongs to the hemolysin E family.

This chain is Putative hemolysin E-like protein, found in Escherichia coli O6:H1 (strain CFT073 / ATCC 700928 / UPEC).